A 152-amino-acid polypeptide reads, in one-letter code: Large ribosomal subunit protein eL32 (152 aa).

It belongs to the eukaryotic ribosomal protein eL32 family.

This Pyrobaculum aerophilum (strain ATCC 51768 / DSM 7523 / JCM 9630 / CIP 104966 / NBRC 100827 / IM2) protein is Large ribosomal subunit protein eL32 (rpl32e).